Here is a 1464-residue protein sequence, read N- to C-terminus: Nuclear pore complex protein NUP155 (1464 aa).

Serine 2 is subject to N-acetylserine.

The protein belongs to the non-repetitive/WGA-negative nucleoporin family. In terms of assembly, part of the nuclear pore complex (NPC). The NPC has an eight-fold symmetrical structure comprising a central transport channel and two rings, the cytoplasmic and nuclear rings, to which eight filaments are attached. The cytoplasmic filaments have loose ends, while the nuclear filaments are joined in a distal ring, forming a nuclear basket. NPCs are highly dynamic in configuration and composition, and can be devided in 3 subcomplexes, the NUP62 subcomplex, the NUP107-160 subcomplex and the NUP93 subcomplex, containing approximately 30 different nucleoporin proteins.

The protein localises to the nucleus. The protein resides in the nuclear pore complex. Major component of the nuclear pore complex (NPC). This chain is Nuclear pore complex protein NUP155, found in Arabidopsis thaliana (Mouse-ear cress).